Consider the following 304-residue polypeptide: Small ribosomal subunit biogenesis GTPase RsgA (304 aa).

Residues 78–237 enclose the CP-type G domain; sequence VSFLTRPPVA…VADTPGFNRP (160 aa). GTP contacts are provided by residues 127 to 130 and 179 to 187; these read TKTD and GPSGVGKSS. Zn(2+) is bound by residues C262, C267, H269, and C275.

This sequence belongs to the TRAFAC class YlqF/YawG GTPase family. RsgA subfamily. In terms of assembly, monomer. Associates with 30S ribosomal subunit, binds 16S rRNA. Zn(2+) is required as a cofactor.

The protein resides in the cytoplasm. Functionally, one of several proteins that assist in the late maturation steps of the functional core of the 30S ribosomal subunit. Helps release RbfA from mature subunits. May play a role in the assembly of ribosomal proteins into the subunit. Circularly permuted GTPase that catalyzes slow GTP hydrolysis, GTPase activity is stimulated by the 30S ribosomal subunit. This Synechococcus sp. (strain CC9311) protein is Small ribosomal subunit biogenesis GTPase RsgA.